The primary structure comprises 901 residues: Protein translocase subunit SecA (901 aa).

ATP contacts are provided by residues Gln89, 107 to 111 (GEGKT), and Asp502. Zn(2+) is bound by residues Cys884, Cys886, Cys895, and His896.

This sequence belongs to the SecA family. As to quaternary structure, monomer and homodimer. Part of the essential Sec protein translocation apparatus which comprises SecA, SecYEG and auxiliary proteins SecDF-YajC and YidC. The cofactor is Zn(2+).

It localises to the cell inner membrane. The protein localises to the cytoplasm. It catalyses the reaction ATP + H2O + cellular proteinSide 1 = ADP + phosphate + cellular proteinSide 2.. Part of the Sec protein translocase complex. Interacts with the SecYEG preprotein conducting channel. Has a central role in coupling the hydrolysis of ATP to the transfer of proteins into and across the cell membrane, serving both as a receptor for the preprotein-SecB complex and as an ATP-driven molecular motor driving the stepwise translocation of polypeptide chains across the membrane. This is Protein translocase subunit SecA from Sinorhizobium fredii (strain NBRC 101917 / NGR234).